The sequence spans 469 residues: Putative dipeptidase SAR1836 (469 aa).

Residue H84 coordinates Zn(2+). Residue D86 is part of the active site. D115 is a Zn(2+) binding site. Residue E149 is the Proton acceptor of the active site. 3 residues coordinate Zn(2+): E150, D173, and H440.

This sequence belongs to the peptidase M20A family. Zn(2+) is required as a cofactor.

The polypeptide is Putative dipeptidase SAR1836 (Staphylococcus aureus (strain MRSA252)).